Reading from the N-terminus, the 527-residue chain is UvrABC system protein C (527 aa).

Residues 9–87 form the GIY-YIG domain; that stretch reads KNPGCYIYKN…IKKYSPKYNI (79 aa). Residues 191-226 form the UVR domain; it reads DSLIHELKNEMNEKSKNLQFEEALLIREEINAIERL.

It belongs to the UvrC family. In terms of assembly, interacts with UvrB in an incision complex.

The protein localises to the cytoplasm. Its function is as follows. The UvrABC repair system catalyzes the recognition and processing of DNA lesions. UvrC both incises the 5' and 3' sides of the lesion. The N-terminal half is responsible for the 3' incision and the C-terminal half is responsible for the 5' incision. This chain is UvrABC system protein C, found in Methanococcus maripaludis (strain DSM 14266 / JCM 13030 / NBRC 101832 / S2 / LL).